A 191-amino-acid polypeptide reads, in one-letter code: Probable calcium-binding protein CML8 (191 aa).

Residues 1 to 41 (MASKYRGYYHDEASSAAGGGGGGGGGDGYRREKQVRKKRLT) form a disordered region. The segment covering 17–27 (AGGGGGGGGGD) has biased composition (gly residues). 4 EF-hand domains span residues 43–78 (QKRKEIKEAFDLFDTDGSGTIDPKELNVAMRALGFE), 79–114 (MTPEQIHQMIAEVDKDGSGTIDFDEFVHMMTDKMGE), 116–151 (DAREELNKAFKIIDKDNNGKISDVDIQRLAIETGEP), and 152–187 (FTLDEVREMIEAADENGDGEVDHEEFLKMMKRIGFG). Ca(2+) is bound by residues aspartate 56, aspartate 58, serine 60, threonine 62, glutamate 67, aspartate 92, aspartate 94, serine 96, threonine 98, glutamate 103, aspartate 129, aspartate 131, asparagine 133, lysine 135, aspartate 140, aspartate 165, asparagine 167, aspartate 169, glutamate 171, and glutamate 176.

Functionally, potential calcium sensor. The protein is Probable calcium-binding protein CML8 (CML8) of Oryza sativa subsp. japonica (Rice).